A 553-amino-acid polypeptide reads, in one-letter code: Methionine--tRNA ligase (553 aa).

Residues 12-22 (PYANSQLHLGH) carry the 'HIGH' region motif. Zn(2+)-binding residues include Cys144, Cys147, Cys157, and Cys160. A 'KMSKS' region motif is present at residues 332 to 336 (KFSKS). An ATP-binding site is contributed by Lys335.

This sequence belongs to the class-I aminoacyl-tRNA synthetase family. MetG type 1 subfamily. As to quaternary structure, monomer. The cofactor is Zn(2+).

The protein localises to the cytoplasm. It carries out the reaction tRNA(Met) + L-methionine + ATP = L-methionyl-tRNA(Met) + AMP + diphosphate. Functionally, is required not only for elongation of protein synthesis but also for the initiation of all mRNA translation through initiator tRNA(fMet) aminoacylation. In Dehalococcoides mccartyi (strain ATCC BAA-2100 / JCM 16839 / KCTC 5957 / BAV1), this protein is Methionine--tRNA ligase.